A 437-amino-acid polypeptide reads, in one-letter code: Trigger factor (437 aa).

The region spanning 163-248 is the PPIase FKBP-type domain; it reads GDRVIIDFEG…LNNVSEPTLP (86 aa).

It belongs to the FKBP-type PPIase family. Tig subfamily.

It localises to the cytoplasm. It catalyses the reaction [protein]-peptidylproline (omega=180) = [protein]-peptidylproline (omega=0). Its function is as follows. Involved in protein export. Acts as a chaperone by maintaining the newly synthesized protein in an open conformation. Functions as a peptidyl-prolyl cis-trans isomerase. The sequence is that of Trigger factor from Neisseria gonorrhoeae (strain NCCP11945).